Consider the following 413-residue polypeptide: Multifunctional CCA protein (413 aa).

Residues Gly-8 and Arg-11 each coordinate ATP. CTP is bound by residues Gly-8 and Arg-11. Residues Asp-21 and Asp-23 each contribute to the Mg(2+) site. Residues Arg-91, Arg-143, and Arg-146 each coordinate ATP. Arg-91, Arg-143, and Arg-146 together coordinate CTP. The region spanning 232–333 (TGVHVMMVVD…VRLFERSDAL (102 aa)) is the HD domain.

It belongs to the tRNA nucleotidyltransferase/poly(A) polymerase family. Bacterial CCA-adding enzyme type 1 subfamily. In terms of assembly, monomer. Can also form homodimers and oligomers. Mg(2+) is required as a cofactor. Ni(2+) serves as cofactor.

The enzyme catalyses a tRNA precursor + 2 CTP + ATP = a tRNA with a 3' CCA end + 3 diphosphate. The catalysed reaction is a tRNA with a 3' CCA end + 2 CTP + ATP = a tRNA with a 3' CCACCA end + 3 diphosphate. Its function is as follows. Catalyzes the addition and repair of the essential 3'-terminal CCA sequence in tRNAs without using a nucleic acid template. Adds these three nucleotides in the order of C, C, and A to the tRNA nucleotide-73, using CTP and ATP as substrates and producing inorganic pyrophosphate. tRNA 3'-terminal CCA addition is required both for tRNA processing and repair. Also involved in tRNA surveillance by mediating tandem CCA addition to generate a CCACCA at the 3' terminus of unstable tRNAs. While stable tRNAs receive only 3'-terminal CCA, unstable tRNAs are marked with CCACCA and rapidly degraded. This is Multifunctional CCA protein from Burkholderia vietnamiensis (strain G4 / LMG 22486) (Burkholderia cepacia (strain R1808)).